Here is a 242-residue protein sequence, read N- to C-terminus: MMTMRRHLLLVSNSTLHGGGYLEHCQEHILKFLGAQVKRVLFIPYALHDRDAYAKTARQKFEALGYGLDSVHESPDPVDAVKKAEAIFIGGGNTFRLLKALYDNDLIAAIRKRVLEDGVPYIGSSAGTNVATISINTTNDMPIVYPPSLKALELVPFNINPHYLDPDGNSKHMGETREQRITQYHEEHDTPPVLGLREGCFLLVEGDKATLLGITRARLFLRGKNPTEHEPGHDFSFLLGHS.

Active-site charge relay system residues include S125, D140, and H162.

It belongs to the peptidase S51 family.

Its subcellular location is the cytoplasm. It catalyses the reaction Dipeptidase E catalyzes the hydrolysis of dipeptides Asp-|-Xaa. It does not act on peptides with N-terminal Glu, Asn or Gln, nor does it cleave isoaspartyl peptides.. In terms of biological role, hydrolyzes dipeptides containing N-terminal aspartate residues. In Xenopus laevis (African clawed frog), this protein is Alpha-aspartyl dipeptidase (aad-a).